Consider the following 956-residue polypeptide: Phosphatidylinositol 4-kinase PIK1a (956 aa).

The PIK helical domain maps to 1-120 (MPVAPHELRD…QTVRKFINKL (120 aa)). The disordered stretch occupies residues 545–573 (SRDWAKSTPGSPVARSSQEDEKFYGNVSS). The PI3K/PI4K catalytic domain maps to 658–939 (EDWNEKKHRI…YLIEKSVGSM (282 aa)). The segment at 664–670 (KHRIRKS) is G-loop. Positions 805–813 (QIKDRHNGN) are catalytic loop. An activation loop region spans residues 824–848 (HIDFGFLLSNSPGSVGFEAAPFKLT).

This sequence belongs to the PI3/PI4-kinase family. Type III PI4K subfamily.

The protein resides in the nucleus. It catalyses the reaction a 1,2-diacyl-sn-glycero-3-phospho-(1D-myo-inositol) + ATP = a 1,2-diacyl-sn-glycero-3-phospho-(1D-myo-inositol 4-phosphate) + ADP + H(+). Its function is as follows. Acts on phosphatidylinositol (PI) in the first committed step in the production of the second messenger inositol 1,4,5,-trisphosphate. The polypeptide is Phosphatidylinositol 4-kinase PIK1a (PIKA) (Candida albicans (strain SC5314 / ATCC MYA-2876) (Yeast)).